Consider the following 90-residue polypeptide: Neuropeptide-like 3 (90 aa).

The signal sequence occupies residues 1 to 16; the sequence is MFKLCVFVALLSLAAA. 2 consecutive propeptides follow at residues 17-54 and 67-79; these read APAPAPAPAPAPGLIGPGIVAPGIWGPTVVGSPLLAPQ and AITQVHPSPLLIK. I89 bears the Isoleucine amide mark.

The protein localises to the secreted. The protein is Neuropeptide-like 3 (Nplp3) of Drosophila melanogaster (Fruit fly).